A 236-amino-acid chain; its full sequence is Probable transcriptional regulatory protein FP0835 (236 aa).

It belongs to the TACO1 family.

The protein resides in the cytoplasm. This chain is Probable transcriptional regulatory protein FP0835, found in Flavobacterium psychrophilum (strain ATCC 49511 / DSM 21280 / CIP 103535 / JIP02/86).